A 644-amino-acid polypeptide reads, in one-letter code: Exoribonuclease 2 (644 aa).

The region spanning 189–516 (RQDLTALNFV…NHRLLKAVIK (328 aa)) is the RNB domain. The S1 motif domain occupies 561 to 643 (NTRFAAEIID…ETRSIIARPA (83 aa)).

This sequence belongs to the RNR ribonuclease family. RNase II subfamily.

Its subcellular location is the cytoplasm. It catalyses the reaction Exonucleolytic cleavage in the 3'- to 5'-direction to yield nucleoside 5'-phosphates.. Its function is as follows. Involved in mRNA degradation. Hydrolyzes single-stranded polyribonucleotides processively in the 3' to 5' direction. The protein is Exoribonuclease 2 of Salmonella typhi.